Reading from the N-terminus, the 580-residue chain is D-erythrulose kinase (580 aa).

The DhaK domain maps to Asp7–Tyr327. Catalysis depends on His217, which acts as the Tele-hemiaminal-histidine intermediate. The interval Lys329–Asp360 is disordered. Residues Arg368–Asp570 form the DhaL domain. Residues Asp397–Gly403, Thr443–Ser444, Gly485, Arg542, and Asp555–Gly557 each bind ATP.

It catalyses the reaction D-erythrulose + ATP = D-erythrulose 4-phosphate + ADP + H(+). The protein operates within carbohydrate metabolism; erythritol degradation. Its pathway is carbohydrate metabolism; D-threitol degradation. Catalyzes the phosphorylation of D-erythrulose to D-erythrulose-4P. Involved in the degradation pathways of erythritol and D-threitol, that allow M.smegmatis to grow on these compounds as the sole carbon source. The sequence is that of D-erythrulose kinase from Mycolicibacterium smegmatis (strain ATCC 700084 / mc(2)155) (Mycobacterium smegmatis).